The sequence spans 100 residues: Apolipoprotein C-II (100 aa).

An N-terminal signal peptide occupies residues 1-22 (MGSRFLLALFLILLVLGCEVQA). The lipid binding stretch occupies residues 66-74 (SVDEKLRDM). A lipoprotein lipase cofactor region spans residues 78-100 (SSAAMTTYASIFTDQILTLLKGE).

It belongs to the apolipoprotein C2 family. In terms of processing, proapolipoprotein C-II is synthesized as a sialic acid containing glycoprotein which is subsequently desialylated prior to its proteolytic processing. Post-translationally, proapolipoprotein C-II, the major form found in plasma undergoes proteolytic cleavage of its N-terminal hexapeptide to generate the mature form apolipoprotein C-II, which occurs as the minor form in plasma.

It localises to the secreted. In terms of biological role, component of chylomicrons, very low-density lipoproteins (VLDL), low-density lipoproteins (LDL), and high-density lipoproteins (HDL) in plasma. Plays an important role in lipoprotein metabolism as an activator of lipoprotein lipase. The chain is Apolipoprotein C-II (APOC2) from Microtus ochrogaster (Prairie vole).